The sequence spans 114 residues: Ribonuclease P protein component (114 aa).

Belongs to the RnpA family. In terms of assembly, consists of a catalytic RNA component (M1 or rnpB) and a protein subunit.

The catalysed reaction is Endonucleolytic cleavage of RNA, removing 5'-extranucleotides from tRNA precursor.. Functionally, RNaseP catalyzes the removal of the 5'-leader sequence from pre-tRNA to produce the mature 5'-terminus. It can also cleave other RNA substrates such as 4.5S RNA. The protein component plays an auxiliary but essential role in vivo by binding to the 5'-leader sequence and broadening the substrate specificity of the ribozyme. The chain is Ribonuclease P protein component from Limosilactobacillus fermentum (strain NBRC 3956 / LMG 18251) (Lactobacillus fermentum).